Here is a 278-residue protein sequence, read N- to C-terminus: MMLEARTAFTLLTVLPLRGPEHTDRRLAGRAMALAPFVGLALGLLAGSAVFATRIVTAVPGQRAQTLLPAVVGVTVLALVTRGLHLDGLADLGDGLGAWRARGRDRALEIMRESTIGAFGAIIVLFVVLLQVGALSTTISAHRGTLSILVAAMTSRLAATLACTGAVPPARPDGLGALVAGTVRTRDAALSFLAVCAVAALAGLLDFDGGGPGRALRAVLAVWVGTGVSFLLRRYLLTRFGGITGDILGGLIEITAAATLLVMAMTIPTPVLHTLGLH.

Transmembrane regions (helical) follow at residues 31–51 (AMAL…SAVF), 66–86 (TLLP…GLHL), 115–135 (TIGA…VGAL), 148–168 (ILVA…GAVP), 187–207 (DAAL…LLDF), 215–237 (ALRA…RYLL), and 247–267 (ILGG…AMTI).

The protein belongs to the CobS family. The cofactor is Mg(2+).

The protein resides in the cell membrane. The catalysed reaction is alpha-ribazole + adenosylcob(III)inamide-GDP = adenosylcob(III)alamin + GMP + H(+). It carries out the reaction alpha-ribazole 5'-phosphate + adenosylcob(III)inamide-GDP = adenosylcob(III)alamin 5'-phosphate + GMP + H(+). The protein operates within cofactor biosynthesis; adenosylcobalamin biosynthesis; adenosylcobalamin from cob(II)yrinate a,c-diamide: step 7/7. In terms of biological role, joins adenosylcobinamide-GDP and alpha-ribazole to generate adenosylcobalamin (Ado-cobalamin). Also synthesizes adenosylcobalamin 5'-phosphate from adenosylcobinamide-GDP and alpha-ribazole 5'-phosphate. This Frankia casuarinae (strain DSM 45818 / CECT 9043 / HFP020203 / CcI3) protein is Adenosylcobinamide-GDP ribazoletransferase.